Consider the following 729-residue polypeptide: Probable ATP-dependent RNA helicase DDX17 (729 aa).

The disordered stretch occupies residues 20-115; sequence EAATVASATG…PPKKFGNPGE (96 aa). Residue serine 64 is modified to Phosphoserine. Over residues 86–95 the composition is skewed to basic and acidic residues; the sequence is GDRDRDRDRG. A compositionally biased stretch (gly residues) spans 96–105; it reads GFGARGGGGL. Lysine 108, lysine 109, and lysine 121 each carry N6-acetyllysine; by EP300. A Glycyl lysine isopeptide (Lys-Gly) (interchain with G-Cter in SUMO); alternate cross-link involves residue lysine 129. A Glycyl lysine isopeptide (Lys-Gly) (interchain with G-Cter in SUMO1); alternate cross-link involves residue lysine 129. A Glycyl lysine isopeptide (Lys-Gly) (interchain with G-Cter in SUMO2); alternate cross-link involves residue lysine 129. Positions 171-199 match the Q motif motif; the sequence is FAFHHANFPQYVMDVLMDQHFTEPTPIQC. In terms of domain architecture, Helicase ATP-binding spans 202-377; sequence FPLALSGRDM…EDFLRDYTQI (176 aa). 215–222 is an ATP binding site; the sequence is AQTGSGKT. The DEAD box motif lies at 325–328; the sequence is DEAD. Residues 405 to 552 enclose the Helicase C-terminal domain; the sequence is KLIQLMEEIM…AINPKLMQLV (148 aa). At threonine 523 the chain carries Phosphothreonine. A Glycyl lysine isopeptide (Lys-Gly) (interchain with G-Cter in SUMO2) cross-link involves residue lysine 528. The transactivation domain stretch occupies residues 547-729; it reads KLMQLVDHRG…PPPPPPPSRK (183 aa). Disordered regions lie at residues 551–623 and 659–729; these read LVDH…GSPN and TYGA…PSRK. Polar residues predominate over residues 568–578; it reads RTTSSANNPNL. Residues 583–610 are compositionally biased toward basic and acidic residues; it reads ECDRRLRGVKDGGRRDSASYRDRSETDR. Positions 659-688 are enriched in low complexity; sequence TYGASSTTSTGRSSQSSSQQFSGIGRSGQQ. An Omega-N-methylarginine modification is found at arginine 684. Positions 689–698 are enriched in polar residues; the sequence is PQPLMSQQFA. Residues 717–729 are compositionally biased toward pro residues; the sequence is YPPPPPPPPPSRK. The tract at residues 718–726 is interaction with YAP1; the sequence is PPPPPPPPP.

It belongs to the DEAD box helicase family. DDX5/DBP2 subfamily. In terms of assembly, interacts with DDX5 in an RNA-independent manner. Interacts with CDK9 transcription elongation complex under basal conditions. Following cell stimulation with poly(I:C), a synthetic double-stranded RNA mimicking viral infection, the interaction with CDK9 is decreased. Interacts with ESR1 in an estrogen-independent manner. Interacts with HNRNPH1; this interaction is important for the regulation of alternative splicing on G-quadruplex structures. At high, but not low, cell density, interacts with DROSHA and DGCR8, the core components of the microprocessor complex involved in the maturation of primary microRNAs (pri-miRNAs) into pre-miRNAs. The interaction with DGCR8 is reduced during mitosis. At low, but not high, cell density, interacts with YAP1 and with its paralog, WWTR1/TAZ. Interactions with DROSHA and YAP1 are mutually exclusive. In vitro, the pre-miRNA processing activity of the DDX17-containing microprocessor complex is weaker than that of the DROSHA/DGCR8 microprocessor complex devoid of DDX17. Interacts with UPF3B. Interacts with NFAT5; this interaction leads to DDX17 recruitment to LNC2 and S100A4 promoters and NFAT5-mediated DDX17-enhanced transactivation. Interacts with HDAC1, HDAC2 and HDAC3; this interaction with HDAC1 and HDAC3, but not HDAC2, depends upon DDX17 acetylation. Interacts with ZC3HAV1 (via N-terminal domain) in an RNA-independent manner. Interacts with EXOSC3/RRP40 and EXOSC5/RRP46; this interaction may be indirect and mediated by ZC3HAV1-binding. Interacts with EP300; this interaction leads to acetylation at lysine residues. Interacts with CREBBP/CBP and KAT2B/P/CAF. Directly interacts with CTNNB1. Interacts with MYOD1. Interacts with TP53. Interacts with DCP1A in an RNA-independent manner. Interacts with DCP2 in an RNA-dependent manner. Interacts with DHX36; this interaction occurs in a RNA-dependent manner. Interacts with ERCC6. Post-translationally, sumoylation significantly increases stability. It also promotes interaction specifically with HDAC1 (but not HDAC2, nor HDAC3) and strongly stimulates ESR1 and TP53 coactivation. Acetylation at lysine residues stabilizes the protein, stimulates interaction with HDAC1 and HDAC3, but not HDAC2, and represses ESR1 and TP53 coactivation activity. Widely expressed. Low expression, if any, in normal colonic epithelial cells (at protein level). Levels tend to increase during colon cancer progression, from very low in benign hyperplastic polyps to very high in tubular and villous adenomas.

Its subcellular location is the nucleus. The protein resides in the nucleolus. It localises to the cytoplasm. The protein localises to the cytosol. The catalysed reaction is ATP + H2O = ADP + phosphate + H(+). Functionally, as an RNA helicase, unwinds RNA and alters RNA structures through ATP binding and hydrolysis. Involved in multiple cellular processes, including pre-mRNA splicing, alternative splicing, ribosomal RNA processing and miRNA processing, as well as transcription regulation. Regulates the alternative splicing of exons exhibiting specific features. For instance, promotes the inclusion of AC-rich alternative exons in CD44 transcripts. This function requires the RNA helicase activity. Affects NFAT5 and histone macro-H2A.1/MACROH2A1 alternative splicing in a CDK9-dependent manner. In NFAT5, promotes the introduction of alternative exon 4, which contains 2 stop codons and may target NFAT5 exon 4-containing transcripts to nonsense-mediated mRNA decay, leading to the down-regulation of NFAT5 protein. Affects splicing of mediators of steroid hormone signaling pathway, including kinases that phosphorylates ESR1, such as CDK2, MAPK1 and GSK3B, and transcriptional regulators, such as CREBBP, MED1, NCOR1 and NCOR2. By affecting GSK3B splicing, participates in ESR1 and AR stabilization. In myoblasts and epithelial cells, cooperates with HNRNPH1 to control the splicing of specific subsets of exons. In addition to binding mature mRNAs, also interacts with certain pri-microRNAs, including MIR663/miR-663a, MIR99B/miR-99b, and MIR6087/miR-6087. Binds pri-microRNAs on the 3' segment flanking the stem loop via the 5'-[ACG]CAUC[ACU]-3' consensus sequence. Required for the production of subsets of microRNAs, including MIR21 and MIR125B1. May be involved not only in microRNA primary transcript processing, but also stabilization. Participates in MYC down-regulation at high cell density through the production of MYC-targeting microRNAs. Along with DDX5, may be involved in the processing of the 32S intermediate into the mature 28S ribosomal RNA. Promoter-specific transcription regulator, functioning as a coactivator or corepressor depending on the context of the promoter and the transcriptional complex in which it exists. Enhances NFAT5 transcriptional activity. Synergizes with TP53 in the activation of the MDM2 promoter; this activity requires acetylation on lysine residues. May also coactivate MDM2 transcription through a TP53-independent pathway. Coactivates MMP7 transcription. Along with CTNNB1, coactivates MYC, JUN, FOSL1 and cyclin D1/CCND1 transcription. Alone or in combination with DDX5 and/or SRA1 non-coding RNA, plays a critical role in promoting the assembly of proteins required for the formation of the transcription initiation complex and chromatin remodeling leading to coactivation of MYOD1-dependent transcription. This helicase-independent activity is required for skeletal muscle cells to properly differentiate into myotubes. During epithelial-to-mesenchymal transition, coregulates SMAD-dependent transcriptional activity, directly controlling key effectors of differentiation, including miRNAs which in turn directly repress its expression. Plays a role in estrogen and testosterone signaling pathway at several levels. Mediates the use of alternative promoters in estrogen-responsive genes and regulates transcription and splicing of a large number of steroid hormone target genes. Contrary to splicing regulation activity, transcriptional coregulation of the estrogen receptor ESR1 is helicase-independent. Plays a role in innate immunity. Specifically restricts bunyavirus infection, including Rift Valley fever virus (RVFV) or La Crosse virus (LACV), but not vesicular stomatitis virus (VSV), in an interferon- and DROSHA-independent manner. Binds to RVFV RNA, likely via structured viral RNA elements. Promotes mRNA degradation mediated by the antiviral zinc-finger protein ZC3HAV1, in an ATPase-dependent manner. The polypeptide is Probable ATP-dependent RNA helicase DDX17 (DDX17) (Homo sapiens (Human)).